A 113-amino-acid chain; its full sequence is Transcriptional regulator RamA (113 aa).

The HTH araC/xylS-type domain occupies 9 to 107; the sequence is DTIVEWIDDN…NQPPGAYRKE (99 aa). 2 consecutive DNA-binding regions (H-T-H motif) follow at residues 26-47 and 74-97; these read DDIARHAGYSKWHLQRLFLQYK and VYDICLKYGFDSQQTFTRVFTRTF.

As to quaternary structure, monomer. Interacts with the C-terminus of RNAP subunit RpoA when part of class I or class II promoter complexes. Also interacts with sigma-70/RpoD in class II promoter complexes.

Functionally, transcriptional regulator. Binds to regulatory regions of target genes, including its own gene, efflux pump operon acrAB, antisense RNA gene micF, and various genes involved in lipid A biosynthesis, including lpxO and lpxL-2. Regulates expression of many genes, perhaps including its own; activates various lipid A biosynthetic genes, and as a result of activating acrAB, confers multidrug resistance. Plays a role in virulence and survival in host cells. The chain is Transcriptional regulator RamA from Klebsiella pneumoniae subsp. pneumoniae (strain HS11286).